The chain runs to 95 residues: Acylphosphatase (95 aa).

The Acylphosphatase-like domain maps to 6 to 94 (RVRVIVKGIV…EDFTGFSVRY (89 aa)). Catalysis depends on residues Arg21 and Asn39.

Belongs to the acylphosphatase family.

The enzyme catalyses an acyl phosphate + H2O = a carboxylate + phosphate + H(+). This chain is Acylphosphatase (acyP), found in Caldivirga maquilingensis (strain ATCC 700844 / DSM 13496 / JCM 10307 / IC-167).